The chain runs to 130 residues: MYSAVTQDIQITVLPEFIPERSNADQAMFFWAYTVEIANQSEKTVQLTARHWKITDGNGRLEEVQGPGVVGEQPILKPGETFRYTSGSNLTTPSGIMTGAYRMVDENGEEFDAQIPVFSLDSPFVRRVLN.

Positions 3–127 constitute an ApaG domain; sequence SAVTQDIQIT…FSLDSPFVRR (125 aa).

The protein is Protein ApaG of Methylocella silvestris (strain DSM 15510 / CIP 108128 / LMG 27833 / NCIMB 13906 / BL2).